Reading from the N-terminus, the 963-residue chain is MAERGGAGGGPGGAGGGSGQRGSGVAQSPQQPPPQQQQQQPPQQPTPPKLAQATSSSSSTSAAAASSSSSSTSTSMAVAVASGSAPPGGPGPGRTPAPVQMNLYATWEVDRSSSSCVPRLFSLTLKKLVMLKEMDKDLNSVVIAVKLQGSKRILRSNEIVLPASGLVETELQLTFSLQYPHFLKRDANKLQIMLQRRKRYKNRTILGYKTLAVGLINMAEVMQHPNEGALVLGLHSNVKDVSVPVAEIKIYSLSSQPIDHEGIKSKLSDRSPDIDNYSEEEEESFSSEQEGSDDPLHGQDLFYEDEDLRKVKKTRRKLTSTSAITRQPNIKQKFVALLKRFKVSDEVGFGLEHVSREQIREVEEDLDELYDSLEMYNPSDSGPEMEETESILSTPKPKLKPFFEGMSQSSSQTEIGSLNSKGSLGKDTTSPMELAALEKIKSTWIKNQDDSLTETDTLEITDQDMFGDASTSLVVPEKVKTPMKSSKTDLQGSASPSKVEGVHTPRQKRSTPLKERQLSKPLSERTNSSDSERSPDLGHSTQIPRKVVYDQLNQILVSDAALPENVILVNTTDWQGQYVAELLQDQRKPVVCTCSTVEVQAVLSALLTRIQRYCNCNSSMPRPVKVAAVGGQSYLSSILRFFVKSLANKTSDWLGYMRFLIIPLGSHPVAKYLGSVDSKYSSSFLDSGWRDLFSRSEPPVSEQLDVAGRVMQYVNGAATTHQLPVAEAMLTCRHKFPDEDSYQKFIPFIGVVKVGLVEDSPSTAGDGDDSPVVSLTVPSTSPPSSSGLSRDATATPPSSPSMSSALAIVGSPNSPYGDVIGLQVDYWLGHPGERRREGDKRDASSKNTLKSVFRSVQVSRLPHSGEAQLSGTMAMTVVTKEKNKKVPTIFLSKKPREKEVDSKSQVIEGISRLICSAKQQQTMLRVSIDGVEWSDIKFFQLAAQWPTHVKHFPVGLFSGSKAT.

The span at 1–22 shows a compositional bias: gly residues; sequence MAERGGAGGGPGGAGGGSGQRG. Disordered stretches follow at residues 1–72 and 78–97; these read MAER…SSST and VAVA…RTPA. N-acetylalanine is present on Ala2. Ser28 is modified (phosphoserine). The residue at position 46 (Thr46) is a Phosphothreonine. A compositionally biased stretch (low complexity) spans 53–72; it reads ATSSSSSTSAAAASSSSSST. Residues 168–175 form an involved in binding to AP-1 region; that stretch reads ETELQLTF. Residue Tyr251 is modified to Phosphotyrosine. The span at 262 to 273 shows a compositional bias: basic and acidic residues; the sequence is GIKSKLSDRSPD. 2 disordered regions span residues 262 to 299 and 377 to 428; these read GIKS…LHGQ and NPSD…GKDT. The span at 276 to 293 shows a compositional bias: acidic residues; the sequence is NYSEEEEESFSSEQEGSD. A coiled-coil region spans residues 353-377; the sequence is HVSREQIREVEEDLDELYDSLEMYN. 2 positions are modified to phosphoserine: Ser379 and Ser381. Residues 406 to 428 show a composition bias toward polar residues; it reads MSQSSSQTEIGSLNSKGSLGKDT. A phosphoserine mark is found at Ser430 and Ser495. Disordered regions lie at residues 476 to 542 and 760 to 804; these read PEKV…HSTQ and SPST…SMSS. Residues 483-496 show a composition bias toward polar residues; it reads MKSSKTDLQGSASP. Thr504 bears the Phosphothreonine mark. Phosphoserine occurs at positions 519, 528, 529, 531, and 534. A compositionally biased stretch (low complexity) spans 770–804; it reads SPVVSLTVPSTSPPSSSGLSRDATATPPSSPSMSS.

The protein belongs to the PACS family. As to quaternary structure, associates with AP-1 and AP-3 but not with AP-2 complexes. Interacts with FURIN. Forms a ternary complex with FURIN and AP-1. Interacts with NPHP1; the interaction is dependent of NPHP1 phosphorylation by CK2. Interacts with PKD2 (via acidic region). Interacts with SORL1. Interacts with WDR37. (Microbial infection) Interacts with HIV-1 Nef. In terms of assembly, (Microbial infection) Interacts with Epstein-barr virus protein BBLF1.

The protein localises to the golgi apparatus. It is found in the trans-Golgi network. In terms of biological role, coat protein that is involved in the localization of trans-Golgi network (TGN) membrane proteins that contain acidic cluster sorting motifs. Controls the endosome-to-Golgi trafficking of furin and mannose-6-phosphate receptor by connecting the acidic-cluster-containing cytoplasmic domain of these molecules with the adapter-protein complex-1 (AP-1) of endosomal clathrin-coated membrane pits. Involved in HIV-1 nef-mediated removal of MHC-I from the cell surface to the TGN. Required for normal ER Ca2+ handling in lymphocytes. Together with WDR37, it plays an essential role in lymphocyte development, quiescence and survival. Required for stabilizing peripheral lymphocyte populations. In Homo sapiens (Human), this protein is Phosphofurin acidic cluster sorting protein 1 (PACS1).